The chain runs to 520 residues: Cell division control protein 3 (520 aa).

A compositionally biased stretch (basic and acidic residues) spans 1-24; sequence MSLKEEQVSIKQDPEQEERQHDQF. The interval 1–83 is disordered; it reads MSLKEEQVSI…SSQSEKGQVL (83 aa). N-acetylserine is present on Ser-2. A Phosphoserine modification is found at Ser-2. Lys-4 is covalently cross-linked (Glycyl lysine isopeptide (Lys-Gly) (interchain with G-Cter in SUMO)). Ser-9 carries the phosphoserine modification. Glycyl lysine isopeptide (Lys-Gly) (interchain with G-Cter in SUMO) cross-links involve residues Lys-11 and Lys-30. Thr-47 carries the phosphothreonine modification. A compositionally biased stretch (basic and acidic residues) spans 51–64; the sequence is DSERFEAAESDVKV. Position 60 is a phosphoserine (Ser-60). Residue Lys-63 forms a Glycyl lysine isopeptide (Lys-Gly) (interchain with G-Cter in SUMO) linkage. Position 77 is a phosphoserine (Ser-77). The Septin-type G domain maps to 116 to 411; sequence NGFSFNLLCV…ENYRSSKLAK (296 aa). The segment at 126–133 is G1 motif; it reads GPDGIGKT. GTP is bound at residue 126–133; sequence GPDGIGKT. The span at 156-167 shows a compositional bias: acidic residues; sequence ELANDQEEEEGQ. The segment at 156 to 181 is disordered; it reads ELANDQEEEEGQGEGHENQSQEQRHK. The segment covering 168–179 has biased composition (basic and acidic residues); that stretch reads GEGHENQSQEQR. Ser-175 carries the phosphoserine modification. Positions 204–207 are G3 motif; it reads DTEG. Residues Gly-207, 287–295, Gly-344, and Arg-360 each bind GTP; that span reads KSDILTDEE. The tract at residues 286 to 289 is G4 motif; sequence AKSD. A Glycyl lysine isopeptide (Lys-Gly) (interchain with G-Cter in SUMO) cross-link involves residue Lys-287. Residues 427–508 adopt a coiled-coil conformation; it reads ISKQQEEKTL…INSASPNVNH (82 aa). Phosphothreonine is present on Thr-468. The disordered stretch occupies residues 496–520; it reads ELSINSASPNVNHSPVPTKKKGFLR. Polar residues predominate over residues 497–510; that stretch reads LSINSASPNVNHSP. Ser-509 is modified (phosphoserine).

It belongs to the TRAFAC class TrmE-Era-EngA-EngB-Septin-like GTPase superfamily. Septin GTPase family. In terms of assembly, component of the septin complex which consists of CDC3, CDC10, CDC11, CDC12 and probably SHS1 and rearranges to a cortical collar of highly ordered filaments at the mother-bud-neck. A complex formed by CDC3, CDC10, CDC11 and CDC12 is capable of forming long filaments in vitro and the components seem to be present in a 2:2:2:2 arrangement in vivo. The filaments are proposed to be formed by the end-to-end polymerization of CDC3-CDC12-CDC11 complexes with CDC10 serving as a bridge to bundle the polymers into paired filaments. Component of the GIN4 complex composed of at least BNI5, CDC3, CDC10, CDC11, CDC12, GIN4, NAP1 and SHS1. Self-associates. Interacts with SIZ1 and SYP1. In terms of processing, phosphorylated by CDC28. Phosphorylation at the end of G1 may facilitate initiation of a new cell cycle by promoting disassembly of the obsolete septin ring from the previous cell cycle. Post-translationally, sumoylated during mitosis on the mother cell side of the bud neck by UBC9/SIZ1. Sumoylation probably plays a central role in regulating septin ring disassembly during the cell cycle.

The protein resides in the membrane. The protein localises to the bud neck. Functionally, septins are GTPases involved in cytokinesis that assemble early in the cell cycle as a patch at the incipient bud site and form a ring approximate 15 minutes before bud emergence, which transforms into an hour-glass shaped collar of cortical filaments that spans both sides of the mother-bud neck. This collar persists until just before cytokinesis, when it splits into two rings that occupy opposite sides of the neck. The septins at the bud neck serve as a structural scaffold that recruits different components involved in diverse processes at specific stages during the cell cycle. Many proteins bind asymmetrically to the septin collar. The septin assembly is regulated by protein kinases GIN4 and/or CLA4. May act by recruiting MYO1 and HOF1, a protein involved in septation, to the site of cleavage. Septins are also involved in cell morphogenesis, bud site selection, chitin deposition, cell cycle regulation, cell compartmentalization and spore wall formation. This Saccharomyces cerevisiae (strain ATCC 204508 / S288c) (Baker's yeast) protein is Cell division control protein 3 (CDC3).